Consider the following 129-residue polypeptide: Phenazine antibiotic resistance protein EhpR (129 aa).

The region spanning Thr-10–Leu-128 is the VOC domain. D-alanylgriseoluteate-binding positions include Arg-42–Tyr-43 and Trp-57.

As to quaternary structure, homodimer.

In terms of biological role, required for resistance to the phenazine antibiotic D-alanylgriseoluteic acid (AGA), an antibiotic produced by E.agglomerans itself, and thus protects the bacterium against phenazine toxicity. Probably binds AGA and acts as a chaperone that works in tandem with a membrane transporter for subsequent antibiotic secretion. The protein is Phenazine antibiotic resistance protein EhpR of Enterobacter agglomerans (Erwinia herbicola).